A 61-amino-acid chain; its full sequence is Protein CopA/IncA (61 aa).

Controls the copy number in gene replication. The chain is Protein CopA/IncA (copA) from Escherichia coli.